The chain runs to 392 residues: Pannexin-3 (392 aa).

The Cytoplasmic portion of the chain corresponds to 1 to 39 (MSLAHTAAEYMLSDALLPDRRGSRLKGLRLELPLDKMVK). Residues 40–60 (FITVGFPLLLMSLAFAQEFSS) form a helical membrane-spanning segment. Topologically, residues 61–113 (GSPISCFSPSNFSVRQAAYVDSSCWDSLAHHTQDKAGQYKVKSLWPHKALPYS) are extracellular. Residue Asn71 is glycosylated (N-linked (GlcNAc...) asparagine). A helical membrane pass occupies residues 114–134 (LLALAVAMYLPVLLWQYVAVP). The Cytoplasmic portion of the chain corresponds to 135–215 (SLSSDLLFII…VATYLLRNAL (81 aa)). The helical transmembrane segment at 216 to 236 (LLLFTSATYLYLGQFHLDVFF) threads the bilayer. The Extracellular portion of the chain corresponds to 237–267 (QDEFNCFIKTGLLHDETHVPELITCRLTSLS). The helical transmembrane segment at 268–288 (VFQIVSVSSAAIYTILVPVII) threads the bilayer. Topologically, residues 289–392 (YNLTRLCRWD…LTQHTYDEHA (104 aa)) are cytoplasmic.

The protein belongs to the pannexin family. As to quaternary structure, homoheptameric. In terms of processing, N-glycosylation may play a role in cell surface targeting. In terms of tissue distribution, expressed in skin, cartilage, heart, lung, liver, spleen, thymus and kidney. Not expressed in brain. Expressed in calvarial cells.

The protein localises to the cell membrane. The protein resides in the endoplasmic reticulum membrane. The catalysed reaction is Ca(2+)(in) = Ca(2+)(out). The enzyme catalyses ATP(in) = ATP(out). Regulator of osteoblast differentiation by functionning as a Ca(2+) channel in the endoplasmic reticulum which regulates calmodulin (CaM) pathways. Allows ATP release into the extracellular space and activation or purinergic receptors. This Mus musculus (Mouse) protein is Pannexin-3 (Panx3).